We begin with the raw amino-acid sequence, 736 residues long: Eukaryotic translation initiation factor 3 subunit B (736 aa).

The tract at residues 1–94 is sufficient for interaction with HCR1 and TIF32; sequence MAAVFDDIRL…LFIEFEDAGA (94 aa). Positions 1–219 are sufficient for interaction with PIC8; it reads MAAVFDDIRL…GIASWGGPQF (219 aa). One can recognise an RRM domain in the interval 37-120; it reads RYVVVDGAPV…HRLWVNGLDD (84 aa). WD repeat units lie at residues 140-182, 186-224, 226-244, 245-284, 288-328, 332-375, 443-483, 511-557, 566-604, and 616-662; these read EFEA…PENV, RRNW…RLRR, AHPD…YLVT, FSSE…CVKT, PPQQ…QLLG, MKIE…QSCK, EIKD…VSFY, AIDG…TEKI, ATLR…KAEN, and VREE…QDAM.

This sequence belongs to the eIF-3 subunit B family. In terms of assembly, component of the eukaryotic translation initiation factor 3 (eIF-3) complex.

Its subcellular location is the cytoplasm. Its function is as follows. RNA-binding component of the eukaryotic translation initiation factor 3 (eIF-3) complex, which is involved in protein synthesis of a specialized repertoire of mRNAs and, together with other initiation factors, stimulates binding of mRNA and methionyl-tRNAi to the 40S ribosome. The eIF-3 complex specifically targets and initiates translation of a subset of mRNAs involved in cell proliferation. The sequence is that of Eukaryotic translation initiation factor 3 subunit B from Eremothecium gossypii (strain ATCC 10895 / CBS 109.51 / FGSC 9923 / NRRL Y-1056) (Yeast).